A 936-amino-acid polypeptide reads, in one-letter code: F-box protein dre-1 (936 aa).

A disordered region spans residues 1 to 67 (MSSSSSPFFH…GSSEADNPTL (67 aa)). The span at 22–36 (QQSPSYSQNSNSPSQ) shows a compositional bias: low complexity. Residues 48-63 (GSTSMRYSPSGSSEAD) are compositionally biased toward polar residues. The 47-residue stretch at 159–205 (QDHINRLPEELLLKVFSFLPDKSLLACSSVSYRFNQISNSHEVWKEL) folds into the F-box domain. PbH1 repeat units follow at residues 405 to 427 (SAAP…YITD), 428 to 450 (NATG…WVKN), 451 to 473 (HANP…FTFE), 474 to 496 (HGQG…EVKN), 497 to 519 (SANP…YVHE), 520 to 542 (RGRG…WITS), 543 to 565 (HSDP…YIFG), 566 to 588 (EGRG…QIRS), 589 to 611 (QSDP…YVHE), 612 to 634 (KGRG…WVTT), 635 to 657 (GSSP…YFYD), 658 to 680 (QGHG…QIRT), 681 to 703 (GSNP…LVYN), 704 to 726 (GGKG…WIKT), 727 to 749 (DSEP…CIFN), 750 to 772 (RGKG…LIST), 773 to 795 (ESNP…EITN), and 796 to 818 (GATA…CVAT). The UBR-type zinc-finger motif lies at 843 to 914 (GLCLFKVSSN…LERHCHLQNV (72 aa)).

Component of a SCF ubiquitin ligase complex. Interacts (via F-box) with skr-1. Interacts with blmp-1; the interaction targets blmp-1 for proteasomal degradation. Interacts with ced-9; the interaction inhibits ced-9 activity, either directly or indirectly. In mid-embryogenesis, expression is most prominent in epidermal and intestinal cells. By the 1.5-fold stage of embryogenesis, expression is additionally detected in neurons and other cells. During larval and adult stages, highest expression is seen in epidermal seam cells and hypodermis. In larvae, strongly expressed in the P epidermal blast cells and descendents that give rise to the vulva and weakly expressed in the somatic gonad, including the gonadoblasts, the anchor cell and the distal tip cells. Some weak expression also seen in adult spermatheca and uterus. In the musculature, expressed in the pharynx, anal depressor, sex muscles, and body wall muscles. Detected in neurons of the head, tail, ventral cord and periphery. Also expressed in the embryonic tail spike cell.

It localises to the nucleus. Its subcellular location is the cytoplasm. It participates in protein modification; protein ubiquitination. Functionally, substrate recognition component of a SCF (SKP1-CUL1-F-box protein) E3 ubiquitin-protein ligase complex which mediates the ubiquitination and subsequent proteasomal degradation of target proteins including blmp-1. Promotes ubiquitination of snail family proteins ces-1, scrt-1 and snai-1. Heterochronic protein which is required for the timing of gonad development and epidermal seam cell differentiation. Regulates tail-spike cell death through inhibition of the apoptosis regulator ced-9. In Caenorhabditis elegans, this protein is F-box protein dre-1.